The chain runs to 356 residues: Arginine kinase Lit v 2.0101 (356 aa).

Residues 9–91 enclose the Phosphagen kinase N-terminal domain; the sequence is KLEAGFKKLE…FDPIIEDYHV (83 aa). Residue 64 to 68 participates in L-arginine binding; that stretch reads GVGIY. Residues 119–356 form the Phosphagen kinase C-terminal domain; the sequence is FVISTRVRCG…LELIKIEKEM (238 aa). ATP is bound by residues 122–126 and H185; that span reads STRVR. E225 is an L-arginine binding site. An ATP-binding site is contributed by R229. Residue C271 participates in L-arginine binding. Residues 280–284 and 309–314 each bind ATP; these read RASVH and RGTRGE. E314 is an L-arginine binding site.

Belongs to the ATP:guanido phosphotransferase family. In terms of assembly, monomer. As to expression, muscle (at protein level).

The catalysed reaction is L-arginine + ATP = N(omega)-phospho-L-arginine + ADP + H(+). The enzyme catalyses dTDP + ATP = dTTP + ADP. Its function is as follows. Catalyzes the reversible transfer of high energy ATP gamma-phosphate group to L-arginine. Has nucleoside diphosphate kinase-like activity toward dTDP. Binds and phosphorylates dTDP using ATP as a phosphate donor. Does not phosphorylate dADP, dCDP, dGDP, dTMP or thymidine. This is Arginine kinase Lit v 2.0101 from Penaeus vannamei (Whiteleg shrimp).